The chain runs to 281 residues: Diaminopimelate epimerase (281 aa).

Positions 11 and 65 each coordinate substrate. Catalysis depends on Cys74, which acts as the Proton donor. Substrate contacts are provided by residues 75 to 76 (GN), Asn164, Asn197, and 215 to 216 (ER). Cys224 (proton acceptor) is an active-site residue. Residue 225–226 (GT) coordinates substrate.

Belongs to the diaminopimelate epimerase family. As to quaternary structure, homodimer.

The protein localises to the cytoplasm. The enzyme catalyses (2S,6S)-2,6-diaminopimelate = meso-2,6-diaminopimelate. The protein operates within amino-acid biosynthesis; L-lysine biosynthesis via DAP pathway; DL-2,6-diaminopimelate from LL-2,6-diaminopimelate: step 1/1. Catalyzes the stereoinversion of LL-2,6-diaminopimelate (L,L-DAP) to meso-diaminopimelate (meso-DAP), a precursor of L-lysine and an essential component of the bacterial peptidoglycan. The protein is Diaminopimelate epimerase of Heliobacterium modesticaldum (strain ATCC 51547 / Ice1).